The following is a 304-amino-acid chain: Acetyl-coenzyme A carboxylase carboxyl transferase subunit beta (304 aa).

A CoA carboxyltransferase N-terminal domain is found at 23-292; sequence VWTKCDSCGQ…PNPDAPREGV (270 aa). Zn(2+) contacts are provided by cysteine 27, cysteine 30, cysteine 46, and cysteine 49. A C4-type zinc finger spans residues 27–49; it reads CDSCGQVLYRAELERNLEVCPKC. The segment at 283–304 is disordered; sequence PNPDAPREGVVVPPAPDQESEA.

Belongs to the AccD/PCCB family. As to quaternary structure, acetyl-CoA carboxylase is a heterohexamer composed of biotin carboxyl carrier protein (AccB), biotin carboxylase (AccC) and two subunits each of ACCase subunit alpha (AccA) and ACCase subunit beta (AccD). Zn(2+) is required as a cofactor.

The protein localises to the cytoplasm. It catalyses the reaction N(6)-carboxybiotinyl-L-lysyl-[protein] + acetyl-CoA = N(6)-biotinyl-L-lysyl-[protein] + malonyl-CoA. It functions in the pathway lipid metabolism; malonyl-CoA biosynthesis; malonyl-CoA from acetyl-CoA: step 1/1. In terms of biological role, component of the acetyl coenzyme A carboxylase (ACC) complex. Biotin carboxylase (BC) catalyzes the carboxylation of biotin on its carrier protein (BCCP) and then the CO(2) group is transferred by the transcarboxylase to acetyl-CoA to form malonyl-CoA. This Salmonella agona (strain SL483) protein is Acetyl-coenzyme A carboxylase carboxyl transferase subunit beta.